A 677-amino-acid polypeptide reads, in one-letter code: Methionine--tRNA ligase (677 aa).

Residues 15–25 (PYANGSIHLGH) carry the 'HIGH' region motif. Zn(2+)-binding residues include Cys-146, Cys-149, Cys-159, and Cys-162. The 'KMSKS' region signature appears at 333 to 337 (KMSKS). Lys-336 is a binding site for ATP. A tRNA-binding domain is found at 575–677 (DFAKVDLRVA…AGAKPGHQVK (103 aa)).

Belongs to the class-I aminoacyl-tRNA synthetase family. MetG type 1 subfamily. As to quaternary structure, homodimer. Requires Zn(2+) as cofactor.

It localises to the cytoplasm. The enzyme catalyses tRNA(Met) + L-methionine + ATP = L-methionyl-tRNA(Met) + AMP + diphosphate. Its function is as follows. Is required not only for elongation of protein synthesis but also for the initiation of all mRNA translation through initiator tRNA(fMet) aminoacylation. The sequence is that of Methionine--tRNA ligase from Escherichia coli O127:H6 (strain E2348/69 / EPEC).